The primary structure comprises 337 residues: Holliday junction branch migration complex subunit RuvB (337 aa).

The segment at 1–179 (MTHQVSVLHQ…FSFSGRVSYY (179 aa)) is large ATPase domain (RuvB-L). ATP-binding positions include Leu-18, Arg-19, Gly-60, Lys-63, Thr-64, Ser-65, 126–128 (EDY), Arg-169, Tyr-179, and Arg-216. Thr-64 serves as a coordination point for Mg(2+). The interval 180–250 (SDEDLATILK…VAEKALSMLL (71 aa)) is small ATPAse domain (RuvB-S). A head domain (RuvB-H) region spans residues 253–337 (DWGLNEIDIK…DNLQILGEEK (85 aa)). The DNA site is built by Lys-308 and Arg-313.

The protein belongs to the RuvB family. As to quaternary structure, homohexamer. Forms an RuvA(8)-RuvB(12)-Holliday junction (HJ) complex. HJ DNA is sandwiched between 2 RuvA tetramers; dsDNA enters through RuvA and exits via RuvB. An RuvB hexamer assembles on each DNA strand where it exits the tetramer. Each RuvB hexamer is contacted by two RuvA subunits (via domain III) on 2 adjacent RuvB subunits; this complex drives branch migration. In the full resolvosome a probable DNA-RuvA(4)-RuvB(12)-RuvC(2) complex forms which resolves the HJ.

It is found in the cytoplasm. It catalyses the reaction ATP + H2O = ADP + phosphate + H(+). Its function is as follows. The RuvA-RuvB-RuvC complex processes Holliday junction (HJ) DNA during genetic recombination and DNA repair, while the RuvA-RuvB complex plays an important role in the rescue of blocked DNA replication forks via replication fork reversal (RFR). RuvA specifically binds to HJ cruciform DNA, conferring on it an open structure. The RuvB hexamer acts as an ATP-dependent pump, pulling dsDNA into and through the RuvAB complex. RuvB forms 2 homohexamers on either side of HJ DNA bound by 1 or 2 RuvA tetramers; 4 subunits per hexamer contact DNA at a time. Coordinated motions by a converter formed by DNA-disengaged RuvB subunits stimulates ATP hydrolysis and nucleotide exchange. Immobilization of the converter enables RuvB to convert the ATP-contained energy into a lever motion, pulling 2 nucleotides of DNA out of the RuvA tetramer per ATP hydrolyzed, thus driving DNA branch migration. The RuvB motors rotate together with the DNA substrate, which together with the progressing nucleotide cycle form the mechanistic basis for DNA recombination by continuous HJ branch migration. Branch migration allows RuvC to scan DNA until it finds its consensus sequence, where it cleaves and resolves cruciform DNA. The polypeptide is Holliday junction branch migration complex subunit RuvB (Chlamydia felis (strain Fe/C-56) (Chlamydophila felis)).